A 506-amino-acid chain; its full sequence is MLVVLQIHSSINVKVFASRLRKHFFFTRRKITRIATCLSSSRCPLYPSHWNLCRWNNKQGGTEIGLLIGGLIVFRQTLKSDQETKREQKKRDWILVTAFPSPSCSPCSRETTTFELIMTPFFQSGRVSPDLCFCVNPFQKLQNSQDFCGLLLNFSRFRSKAKGANEKENFREGKDLVGRNRVQGAFQGLYELSHDHGRKDDVLVANLGQPESIRSRLRSYSRSFAHHDLLKQGLSQTILPTTQNKSDNQTEEKKSDSEEEREVSSDAAEKESNSLPSILRLSRSRPQPVSEKHDDIVDESDSASACGVLLEDGTTCTTTPVKGRKRCTEHKGKRLSRVSPGIHIPCEVPTVRECEETENICGVILPDMIRCRSKPVSRRKRCEDHKGMRVNAFFFLLNPTERDKAVNEDKSKPETSTGMNQEGSGLLCEATTKNGLPCTRSAPEGSKRCWQHKDKTLNHGSSENVQSATASQVICGFKLYNGSVCEKSPVKGRKRCEEHKGMRITS.

The region spanning 185-225 (AFQGLYELSHDHGRKDDVLVANLGQPESIRSRLRSYSRSFA) is the GIY-YIG domain. The span at 234-247 (LSQTILPTTQNKSD) shows a compositional bias: polar residues. The interval 234 to 298 (LSQTILPTTQ…VSEKHDDIVD (65 aa)) is disordered. Basic and acidic residues predominate over residues 248–272 (NQTEEKKSDSEEEREVSSDAAEKES). The span at 273–288 (NSLPSILRLSRSRPQP) shows a compositional bias: low complexity. Cx9Cx9RCx2HK repeat units follow at residues 306–331 (CGVL…TEHK) and 361–386 (CGVI…EDHK). Residues 404 to 413 (KAVNEDKSKP) show a composition bias toward basic and acidic residues. The segment at 404–426 (KAVNEDKSKPETSTGMNQEGSGL) is disordered. Polar residues predominate over residues 414–423 (ETSTGMNQEG). Cx9Cx9RCx2HK repeat units follow at residues 428–453 (CEAT…WQHK) and 475–500 (CGFK…EEHK).

In terms of tissue distribution, expressed in rosette leaves, stipules, stems, flowers, siliques and mature seeds. Expressed in the vascular bundles of xylem in shoot parenchyma cells. Expressed in the remnant cytoplasm of differentiated fiber cells and in protoxylem element of parenchymal cells.

Its subcellular location is the cytoplasm. The protein resides in the nucleus. Functionally, transcriptional regulator involved in the regulation of cell differentiation in meristems. Binds DNA without sequence preference. This is Protein EFFECTOR OF TRANSCRIPTION 1 from Arabidopsis thaliana (Mouse-ear cress).